A 423-amino-acid chain; its full sequence is Putative competence-damage inducible protein (423 aa).

Belongs to the CinA family.

This Streptococcus thermophilus (strain ATCC BAA-491 / LMD-9) protein is Putative competence-damage inducible protein.